Reading from the N-terminus, the 764-residue chain is FHF complex subunit HOOK interacting protein 2A (764 aa).

The segment at 190–236 (SEDGPKGQDPGSGDVSQCQQPQELSGATGVEPTESEEEPPHQMDDLS) is disordered. Residues 203-214 (DVSQCQQPQELS) are compositionally biased toward polar residues.

Belongs to the FHIP family.

May be required for proper functioning of the nervous system. This is FHF complex subunit HOOK interacting protein 2A from Mus musculus (Mouse).